The chain runs to 362 residues: Probable choline-phosphate cytidylyltransferase (362 aa).

Basic and acidic residues predominate over residues 1–37 (MGEEGIKINDTHKRRIDEVEPSEKEDNVERQTKKYNF). A disordered region spans residues 1-79 (MGEEGIKIND…VSPVEEEPRD (79 aa)). CTP is bound by residues 109 to 117 (VFDLFHIGH) and Lys147. Positions 147 and 176 each coordinate substrate. CTP contacts are provided by residues 193–194 (HD), Tyr198, and 221–225 (RTEGV). A disordered region spans residues 308–362 (KNPLHGSSEPSSPGPTGFLGGINRWMQRRSSSHYDLPRVGNEIAASSSSATEENH). Composition is skewed to low complexity over residues 313–323 (GSSEPSSPGPT) and 351–362 (AASSSSATEENH). 2 positions are modified to phosphoserine: Ser315 and Ser319. A Phosphothreonine modification is found at Thr323. Residue Ser355 is modified to Phosphoserine.

The protein belongs to the cytidylyltransferase family.

It is found in the nucleus. The catalysed reaction is phosphocholine + CTP + H(+) = CDP-choline + diphosphate. This is Probable choline-phosphate cytidylyltransferase from Schizosaccharomyces pombe (strain 972 / ATCC 24843) (Fission yeast).